Consider the following 694-residue polypeptide: MSDQEFDLSKIRNIGIMAHIDAGKTTTTERILYYAGRTHKIGEVHEGGATMDWMEQEQERGITITSAATTVFWLDCKINIIDTPGHVDFTIEVERSLRVLDGAVAVFDAVSGVEPQSETVWRQANKYGVPRIAFVNKMDRMGADYFAAVESMKEKLGANAVAVHCPIGSESQFVGMVDLISQKALYFLDETLGAKWEEREIPEELKEKCAELRYALLEELATIDESNEAFMEKVLEDPDSITEDEIHAVMRKGVIENKINPVLCGTAFKNKGVQQLLNVIVKWLPSPKDRGTIHGISLKNNAEISLEPRKDGPLAALAFKIMTDPYVGRITFIRIYSGTLKKGSAILNSTKDKKERISRLLEMHANERTDRDEFTVGDIGACVGLKFSVTGDTLCDENQEIVLERIEIPEPVIDMAIEPKSKGDREKLAQALNALSEEDPTFRVTSNEETGQTIISGMGELHLDILRDRMIREFKVEANVGKPQVSYKETITKNGASETKYVKQSGGRGQYAHVCLEIEPNEPGKGNEVVSKIVGGVIPKEYIPAVIKGVEEGLNSGVLAGYGLVDVKVNIVFGSYHEVDSSEMAFKICGSMAVKEACRKAAPIILEPIMKIAVITPEDHLGDVIGDLNRRRGKILGQESSRGMAQVNAEVPLSEMFGYTTSLRSLTSGRATSTMEPAFFAKVPQKIQEEIVKK.

One can recognise a tr-type G domain in the interval 9-288 (SKIRNIGIMA…VIVKWLPSPK (280 aa)). GTP is bound by residues 18–25 (AHIDAGKT), 82–86 (DTPGH), and 136–139 (NKMD).

Belongs to the TRAFAC class translation factor GTPase superfamily. Classic translation factor GTPase family. EF-G/EF-2 subfamily.

It localises to the cytoplasm. In terms of biological role, catalyzes the GTP-dependent ribosomal translocation step during translation elongation. During this step, the ribosome changes from the pre-translocational (PRE) to the post-translocational (POST) state as the newly formed A-site-bound peptidyl-tRNA and P-site-bound deacylated tRNA move to the P and E sites, respectively. Catalyzes the coordinated movement of the two tRNA molecules, the mRNA and conformational changes in the ribosome. The protein is Elongation factor G of Chlamydia felis (strain Fe/C-56) (Chlamydophila felis).